Consider the following 279-residue polypeptide: Ribosomal RNA small subunit methyltransferase A (279 aa).

The S-adenosyl-L-methionine site is built by His-15, Leu-17, Gly-42, Glu-64, Asp-89, and Asn-109.

The protein belongs to the class I-like SAM-binding methyltransferase superfamily. rRNA adenine N(6)-methyltransferase family. RsmA subfamily.

It localises to the cytoplasm. It carries out the reaction adenosine(1518)/adenosine(1519) in 16S rRNA + 4 S-adenosyl-L-methionine = N(6)-dimethyladenosine(1518)/N(6)-dimethyladenosine(1519) in 16S rRNA + 4 S-adenosyl-L-homocysteine + 4 H(+). Its function is as follows. Specifically dimethylates two adjacent adenosines (A1518 and A1519) in the loop of a conserved hairpin near the 3'-end of 16S rRNA in the 30S particle. May play a critical role in biogenesis of 30S subunits. The protein is Ribosomal RNA small subunit methyltransferase A of Prochlorococcus marinus (strain SARG / CCMP1375 / SS120).